A 235-amino-acid chain; its full sequence is uncharacterized protein (235 aa).

A run of 3 helical transmembrane segments spans residues 41–61 (IFWHPLYLAVFGLVFMGIYRL), 71–91 (LRTFVLLILVSAVFLTLIEFP), and 129–149 (IGIIGILPANAPGAYQNTPTI).

The protein resides in the membrane. This is an uncharacterized protein from Schizosaccharomyces pombe (strain 972 / ATCC 24843) (Fission yeast).